The primary structure comprises 186 residues: Centromere protein M (186 aa).

It localises to the nucleus. Its subcellular location is the chromosome. It is found in the centromere. Probable component of a centromeric complex involved in assembly of kinetochore proteins, mitotic progression and chromosome segregation. This is Centromere protein M (cenpm) from Danio rerio (Zebrafish).